The chain runs to 1066 residues: Glucose transport transcription regulator RGT1 (1066 aa).

Composition is skewed to polar residues over residues 1 to 11 (MTPMSENNGSE) and 42 to 57 (VESQ…NTSA). Disordered stretches follow at residues 1–70 (MTPM…ACDQ), 108–153 (PSKG…VLLP), 214–285 (YASP…QQQY), 298–399 (GANG…EYPL), 616–645 (DATK…NDSR), and 849–871 (MEHD…ESGK). The segment at residues 68–97 (CDQCRKRKIRCDYDDDKGVCTSCRKNGESC) is a DNA-binding region (zn(2)-C6 fungal-type). Composition is skewed to polar residues over residues 118–131 (VSRS…NTAA), 139–148 (EFSSPSSRQG), 260–270 (GSNPPSLKNVS), and 314–327 (MSPS…SVPM). Composition is skewed to low complexity over residues 328–350 (NQSN…KVQP) and 622–641 (SNDN…NNDN). Residues 855-871 (GNSASRKFTTSQAESGK) are compositionally biased toward polar residues.

The protein belongs to the EDS1/RGT1 family.

Its subcellular location is the nucleus. It is found in the cytoplasm. In terms of biological role, glucose-responsive transcription factor that regulates expression of several glucose transporter (HXT) genes in response to glucose. In the absence of glucose, it functions as a transcriptional repressor, whereas high concentrations of glucose cause it to function as a transcriptional activator. In cells growing on low levels of glucose, has a neutral role, neither repressing nor activating transcription. In Zygosaccharomyces rouxii (strain ATCC 2623 / CBS 732 / NBRC 1130 / NCYC 568 / NRRL Y-229), this protein is Glucose transport transcription regulator RGT1 (RGT1).